We begin with the raw amino-acid sequence, 342 residues long: Anthranilate phosphoribosyltransferase (342 aa).

Residues glycine 83, 86–87, threonine 91, 93–96, 111–119, and alanine 123 contribute to the 5-phospho-alpha-D-ribose 1-diphosphate site; these read GD, NIST, and KHGGRSVSS. Glycine 83 provides a ligand contact to anthranilate. Serine 95 provides a ligand contact to Mg(2+). Anthranilate is bound at residue arginine 169. 2 residues coordinate Mg(2+): aspartate 228 and glutamate 229.

The protein belongs to the anthranilate phosphoribosyltransferase family. As to quaternary structure, homodimer. Requires Mg(2+) as cofactor.

It carries out the reaction N-(5-phospho-beta-D-ribosyl)anthranilate + diphosphate = 5-phospho-alpha-D-ribose 1-diphosphate + anthranilate. It participates in amino-acid biosynthesis; L-tryptophan biosynthesis; L-tryptophan from chorismate: step 2/5. In terms of biological role, catalyzes the transfer of the phosphoribosyl group of 5-phosphorylribose-1-pyrophosphate (PRPP) to anthranilate to yield N-(5'-phosphoribosyl)-anthranilate (PRA). The polypeptide is Anthranilate phosphoribosyltransferase (Neisseria gonorrhoeae (strain ATCC 700825 / FA 1090)).